We begin with the raw amino-acid sequence, 508 residues long: Bifunctional purine biosynthesis protein PurH (508 aa).

An MGS-like domain is found at 1–144 (MTRALLSVSD…KNFASVLPIV (144 aa)).

Belongs to the PurH family.

It catalyses the reaction (6R)-10-formyltetrahydrofolate + 5-amino-1-(5-phospho-beta-D-ribosyl)imidazole-4-carboxamide = 5-formamido-1-(5-phospho-D-ribosyl)imidazole-4-carboxamide + (6S)-5,6,7,8-tetrahydrofolate. The enzyme catalyses IMP + H2O = 5-formamido-1-(5-phospho-D-ribosyl)imidazole-4-carboxamide. Its pathway is purine metabolism; IMP biosynthesis via de novo pathway; 5-formamido-1-(5-phospho-D-ribosyl)imidazole-4-carboxamide from 5-amino-1-(5-phospho-D-ribosyl)imidazole-4-carboxamide (10-formyl THF route): step 1/1. It participates in purine metabolism; IMP biosynthesis via de novo pathway; IMP from 5-formamido-1-(5-phospho-D-ribosyl)imidazole-4-carboxamide: step 1/1. In Leuconostoc mesenteroides subsp. mesenteroides (strain ATCC 8293 / DSM 20343 / BCRC 11652 / CCM 1803 / JCM 6124 / NCDO 523 / NBRC 100496 / NCIMB 8023 / NCTC 12954 / NRRL B-1118 / 37Y), this protein is Bifunctional purine biosynthesis protein PurH.